Consider the following 286-residue polypeptide: Nucleotide-binding protein Sfum_2066 (286 aa).

ATP is bound at residue 8 to 15 (GLSGSGKS). 59-62 (DIRE) contributes to the GTP binding site.

It belongs to the RapZ-like family.

Displays ATPase and GTPase activities. In Syntrophobacter fumaroxidans (strain DSM 10017 / MPOB), this protein is Nucleotide-binding protein Sfum_2066.